Reading from the N-terminus, the 463-residue chain is MGGMPELKLYNTLTREETVFAPIDPDNVRMYVCGPTVYDFAHIGNARPVIVFDVLFRLLRHVYGEDHVTYARNITDVDDKINARALRDHPGLPLNQAIRAVTERTETQFHADVAELGCLEPSVEPRATDNIVEMTEIIEKLIGNGHAYVAAGEVLFDTKSMADYGQLSKRPLDEQQAGARIAVDAHKKNSGDFVLWKLSSHNEPGWESPWGRGRPGWHIECSAMSKRYLGDVFDIHGGGLDLIFPHHENEIAQSRCAHGTEVMANIWMHNGFLQVEGRKMSKSEGNFVTIHDLLHTQIFGGRKWPGEVLRLAMLMTHYREPIDFSIKRLEEAERLLAKWPATEPGDAEPDETVLNALADNLNTVAAVQALHALAQAAHTDPAAGARFAATAALLGLLPKKAEIDEAVAAAVDALVAMRLEMLKAKNFAEADKIRDELTAKGIQLKDGKDAATGERVTTWEVKR.

Cys-33 provides a ligand contact to Zn(2+). A 'HIGH' region motif is present at residues 35–45; the sequence is PTVYDFAHIGN. Zn(2+) is bound by residues Cys-221, His-246, and Glu-250. The 'KMSKS' region motif lies at 279–283; sequence KMSKS. Lys-282 provides a ligand contact to ATP.

Belongs to the class-I aminoacyl-tRNA synthetase family. Monomer. Zn(2+) is required as a cofactor.

It is found in the cytoplasm. The enzyme catalyses tRNA(Cys) + L-cysteine + ATP = L-cysteinyl-tRNA(Cys) + AMP + diphosphate. The polypeptide is Cysteine--tRNA ligase (Rhizobium leguminosarum bv. trifolii (strain WSM2304)).